A 442-amino-acid chain; its full sequence is HTH-type transcriptional regulator NorG (442 aa).

The region spanning 2–46 is the HTH gntR-type domain; sequence KIPSHRQLAIQYNVNRVTIIKSIELLEAEGFIYTKVGSGTYVNDY. The segment at residues 6–25 is a DNA-binding region (H-T-H motif); the sequence is HRQLAIQYNVNRVTIIKSIE. Lys288 carries the N6-(pyridoxal phosphate)lysine modification.

In the C-terminal section; belongs to the class-I pyridoxal-phosphate-dependent aminotransferase family. Requires pyridoxal 5'-phosphate as cofactor.

Functionally, positively regulates the expression of the NorB efflux pump and negatively regulates the expression of the AbcA efflux pump. Binds specifically to the promoters of norA, norB and norC and abcA genes. Could also have an aminotransferase activity. This is HTH-type transcriptional regulator NorG (norG) from Staphylococcus aureus (strain USA300).